The chain runs to 474 residues: Uronate isomerase (474 aa).

It belongs to the metallo-dependent hydrolases superfamily. Uronate isomerase family.

The catalysed reaction is D-glucuronate = D-fructuronate. It carries out the reaction aldehydo-D-galacturonate = keto-D-tagaturonate. The protein operates within carbohydrate metabolism; pentose and glucuronate interconversion. This chain is Uronate isomerase, found in Photorhabdus laumondii subsp. laumondii (strain DSM 15139 / CIP 105565 / TT01) (Photorhabdus luminescens subsp. laumondii).